A 152-amino-acid polypeptide reads, in one-letter code: SsrA-binding protein (152 aa).

Belongs to the SmpB family.

The protein localises to the cytoplasm. Its function is as follows. Required for rescue of stalled ribosomes mediated by trans-translation. Binds to transfer-messenger RNA (tmRNA), required for stable association of tmRNA with ribosomes. tmRNA and SmpB together mimic tRNA shape, replacing the anticodon stem-loop with SmpB. tmRNA is encoded by the ssrA gene; the 2 termini fold to resemble tRNA(Ala) and it encodes a 'tag peptide', a short internal open reading frame. During trans-translation Ala-aminoacylated tmRNA acts like a tRNA, entering the A-site of stalled ribosomes, displacing the stalled mRNA. The ribosome then switches to translate the ORF on the tmRNA; the nascent peptide is terminated with the 'tag peptide' encoded by the tmRNA and targeted for degradation. The ribosome is freed to recommence translation, which seems to be the essential function of trans-translation. The protein is SsrA-binding protein of Rickettsia peacockii (strain Rustic).